The primary structure comprises 399 residues: G2/mitotic-specific cyclin-B2 (399 aa).

Residues 58–78 (PVKATKGPGKMTNTVVPPKPP) are disordered.

The protein belongs to the cyclin family. Cyclin AB subfamily. Interacts with the CDK1 protein kinase to form a serine/threonine kinase holoenzyme complex also known as maturation promoting factor (MPF). The cyclin subunit imparts substrate specificity to the complex.

Functionally, essential for the control of the cell cycle at the G2/M (mitosis) transition. This chain is G2/mitotic-specific cyclin-B2 (CCNB2), found in Gallus gallus (Chicken).